The following is a 384-amino-acid chain: Protein Brevis radix-like 4 (384 aa).

Disordered stretches follow at residues 1 to 35 (MLTCIARSKRAGDESSGQPDDPDSKNAKSLTSQLK) and 50 to 78 (PCTAAQGQGQGQGPIKNNPSSSSVKSDFE). Residues 150-205 (KEWVAQVEPGVLITFVSLPGGGNDLKRIRFSRDMFNKLQAQRWWADNYDKVMELYN) form the BRX 1 domain. Disordered regions lie at residues 214–270 (FPLP…DHNS) and 304–325 (SIRSSSSRDADRSEEMSVSNAS). Positions 221–235 (RSEDENAKVEYHPED) are enriched in basic and acidic residues. Over residues 260–270 (YSSSDSLDHNS) the composition is skewed to polar residues. Positions 309 to 318 (SSRDADRSEE) are enriched in basic and acidic residues. Residues 329–384 (NEWVEQDEPGVYITIKVLPGGKRELRRVRFSRERFGEMHARLWWEENRARIHEQYL) enclose the BRX 2 domain.

It belongs to the BRX family. As to expression, expressed in roots.

Its subcellular location is the nucleus. This is Protein Brevis radix-like 4 (BRXL4) from Arabidopsis thaliana (Mouse-ear cress).